The primary structure comprises 274 residues: Ribose-5-phosphate isomerase (274 aa).

This sequence belongs to the ribose 5-phosphate isomerase family.

It localises to the cytoplasm. It catalyses the reaction aldehydo-D-ribose 5-phosphate = D-ribulose 5-phosphate. It functions in the pathway carbohydrate degradation; pentose phosphate pathway; D-ribose 5-phosphate from D-ribulose 5-phosphate (non-oxidative stage): step 1/1. In Kluyveromyces lactis (strain ATCC 8585 / CBS 2359 / DSM 70799 / NBRC 1267 / NRRL Y-1140 / WM37) (Yeast), this protein is Ribose-5-phosphate isomerase (RKI1).